The primary structure comprises 235 residues: Adenosine 5'-phosphosulfate reductase (235 aa).

4 residues coordinate [4Fe-4S] cluster: cysteine 121, cysteine 122, cysteine 204, and cysteine 207. Residue cysteine 230 is the Nucleophile; cysteine thiosulfonate intermediate of the active site.

It belongs to the PAPS reductase family. CysH subfamily. The cofactor is [4Fe-4S] cluster.

Its subcellular location is the cytoplasm. The enzyme catalyses [thioredoxin]-disulfide + sulfite + AMP + 2 H(+) = adenosine 5'-phosphosulfate + [thioredoxin]-dithiol. It functions in the pathway sulfur metabolism; hydrogen sulfide biosynthesis; sulfite from sulfate. Functionally, catalyzes the formation of sulfite from adenosine 5'-phosphosulfate (APS) using thioredoxin as an electron donor. The sequence is that of Adenosine 5'-phosphosulfate reductase from Geobacillus thermodenitrificans (strain NG80-2).